We begin with the raw amino-acid sequence, 209 residues long: Proteasome subunit beta (209 aa).

Residues 1-10 constitute a propeptide, removed in mature form; by autocatalysis; sequence MVEQSDTMKG. The active-site Nucleophile is the Thr11.

This sequence belongs to the peptidase T1B family. The 20S proteasome core is composed of 14 alpha and 14 beta subunits that assemble into four stacked heptameric rings, resulting in a barrel-shaped structure. The two inner rings, each composed of seven catalytic beta subunits, are sandwiched by two outer rings, each composed of seven alpha subunits. The catalytic chamber with the active sites is on the inside of the barrel. Has a gated structure, the ends of the cylinder being occluded by the N-termini of the alpha-subunits. Is capped at one or both ends by the proteasome regulatory ATPase, PAN.

Its subcellular location is the cytoplasm. It catalyses the reaction Cleavage of peptide bonds with very broad specificity.. Its activity is regulated as follows. The formation of the proteasomal ATPase PAN-20S proteasome complex, via the docking of the C-termini of PAN into the intersubunit pockets in the alpha-rings, triggers opening of the gate for substrate entry. Interconversion between the open-gate and close-gate conformations leads to a dynamic regulation of the 20S proteasome proteolysis activity. Its function is as follows. Component of the proteasome core, a large protease complex with broad specificity involved in protein degradation. The chain is Proteasome subunit beta from Methanospirillum hungatei JF-1 (strain ATCC 27890 / DSM 864 / NBRC 100397 / JF-1).